We begin with the raw amino-acid sequence, 308 residues long: Ornithine carbamoyltransferase (308 aa).

Carbamoyl phosphate contacts are provided by residues 52 to 55 (STRT), Q79, R103, and 130 to 133 (HPLQ). Residues N162, D224, and 228–229 (SM) contribute to the L-ornithine site. Residues 264–265 (CL) and R292 contribute to the carbamoyl phosphate site.

The protein belongs to the aspartate/ornithine carbamoyltransferase superfamily. OTCase family.

It localises to the cytoplasm. It catalyses the reaction carbamoyl phosphate + L-ornithine = L-citrulline + phosphate + H(+). The protein operates within amino-acid biosynthesis; L-arginine biosynthesis; L-arginine from L-ornithine and carbamoyl phosphate: step 1/3. Reversibly catalyzes the transfer of the carbamoyl group from carbamoyl phosphate (CP) to the N(epsilon) atom of ornithine (ORN) to produce L-citrulline. This Pyrobaculum calidifontis (strain DSM 21063 / JCM 11548 / VA1) protein is Ornithine carbamoyltransferase.